Consider the following 515-residue polypeptide: MSDQVIIFDTTLRDGEQALSASLTVKEKLQIAFALERLGVDVIEAGFPISSPGDFESVRTIAKHIKNSRICALSRAVTKDIDVAADALKVAEAFRIHTFISTSTVHVQDKLRRSYDDVVEMGVKAVQRARKYTDDVEFSCEDAGRTPIDNLCRMVEAAINAGANTINIPDTVGYTIPGEFGGIIQTLFNRVPNIDKAIISVHCHDDLGMSVANSIAAVQAGARQVEGTINGIGERAGNCSLEEIAMILQTRSEYLGVHTSLKNDEIHRTSKLVSQLCNMPIQSNKAIVGANAFSHSSGIHQDGMLKNKNTYEIMTPESIGLKNKALNLTSRSGRAAVKSHMDSMGYKAEEYNLDTLYADFVKLADRKGQVFDYDLEALMHFANLRDEDDFYKLNYLSVQSGSVMATTSIKLLCGDEEKCEAAVGNGPVDALYQCIYKLTGYEIVLDKFDLTAKGEGEDGLGQADIIANYKGRKYHGTGLATDIIEASGQALLHVINSIHRADQIAEIKQNKITTV.

A Pyruvate carboxyltransferase domain is found at 5 to 267 (VIIFDTTLRD…HTSLKNDEIH (263 aa)). The Mn(2+) site is built by aspartate 14, histidine 202, histidine 204, and asparagine 238. The tract at residues 392–515 (KLNYLSVQSG…EIKQNKITTV (124 aa)) is regulatory domain.

Belongs to the alpha-IPM synthase/homocitrate synthase family. LeuA type 1 subfamily. Homodimer. It depends on Mn(2+) as a cofactor.

Its subcellular location is the cytoplasm. It carries out the reaction 3-methyl-2-oxobutanoate + acetyl-CoA + H2O = (2S)-2-isopropylmalate + CoA + H(+). The protein operates within amino-acid biosynthesis; L-leucine biosynthesis; L-leucine from 3-methyl-2-oxobutanoate: step 1/4. Functionally, catalyzes the condensation of the acetyl group of acetyl-CoA with 3-methyl-2-oxobutanoate (2-ketoisovalerate) to form 3-carboxy-3-hydroxy-4-methylpentanoate (2-isopropylmalate). This Aliivibrio salmonicida (strain LFI1238) (Vibrio salmonicida (strain LFI1238)) protein is 2-isopropylmalate synthase.